Here is a 146-residue protein sequence, read N- to C-terminus: Large ribosomal subunit protein uL15x (146 aa).

Basic residues-rich tracts occupy residues 1-14 (MTTR…KRGH) and 21-30 (RIGKHRKHPG). The segment at 1-35 (MTTRFKKNRKKRGHVSAGHGRIGKHRKHPGGRGNA) is disordered.

It belongs to the universal ribosomal protein uL15 family.

This chain is Large ribosomal subunit protein uL15x (RPL27AC), found in Arabidopsis thaliana (Mouse-ear cress).